A 944-amino-acid polypeptide reads, in one-letter code: Envelope glycoprotein B (944 aa).

Disordered regions lie at residues 1 to 37 (MGPPPPLRRQRLLLPRPSRRRPPARLASGRRSSRPGS) and 68 to 108 (TDGG…RVTG). An N-terminal signal peptide occupies residues 1–55 (MGPPPPLRRQRLLLPRPSRRRPPARLASGRRSSRPGSSWTWYATLIASLVWYPTV). Low complexity predominate over residues 24-37 (ARLASGRRSSRPGS). At 56–785 (SSTTLEATVV…GGFVSFFTNP (730 aa)) the chain is on the virion surface side. Positions 71–85 (GATGQASGGGGGGAG) are enriched in gly residues. Polar residues predominate over residues 89–99 (PSESPETSADT). Asn114 carries N-linked (GlcNAc...) asparagine; by host glycosylation. 5 disulfides stabilise this stretch: Cys125-Cys577, Cys142-Cys533, Cys215-Cys280, Cys372-Cys420, and Cys608-Cys645. The segment at 182–188 (SYAYIYT) is involved in fusion and/or binding to host membrane. A glycan (N-linked (GlcNAc...) asparagine; by host) is linked at Asn238. The tract at residues 267–274 (GSTWLYKE) is involved in fusion and/or binding to host membrane. 7 N-linked (GlcNAc...) asparagine; by host glycosylation sites follow: Asn369, Asn409, Asn414, Asn426, Asn481, Asn485, and Asn620. Hydrophobic membrane proximal region stretches follow at residues 731–783 (ITSK…SFFT) and 762–782 (LVLGAVGGAVASVVGGFVSFF). The chain crosses the membrane as a helical span at residues 786–806 (FGSLTLIILVVAVVVIVFLLY). Residues 807–944 (QRQRSAVRQP…RDTGSDSELA (138 aa)) are Intravirion-facing. 2 disordered regions span residues 834-878 (TVTT…SATA) and 902-944 (REVP…SELA). Residues 931–934 (YRRL) carry the Internalization motif motif.

The protein belongs to the herpesviridae glycoprotein B family. As to quaternary structure, homotrimer; disulfide-linked. Binds to heparan sulfate proteoglycans. Interacts with gH/gL heterodimer. Post-translationally, a proteolytic cleavage by host furin generates two subunits that remain linked by disulfide bonds.

Its subcellular location is the virion membrane. The protein resides in the host cell membrane. It is found in the host endosome membrane. It localises to the host Golgi apparatus membrane. Functionally, envelope glycoprotein that forms spikes at the surface of virion envelope. Essential for the initial attachment to heparan sulfate moieties of the host cell surface proteoglycans. Involved in fusion of viral and cellular membranes leading to virus entry into the host cell. Following initial binding to its host receptors, membrane fusion is mediated by the fusion machinery composed at least of gB and the heterodimer gH/gL. May be involved in the fusion between the virion envelope and the outer nuclear membrane during virion egress. The protein is Envelope glycoprotein B of Tupaiid herpesvirus (strain 2) (TuHV-2).